Consider the following 366-residue polypeptide: Mitochondrial substrate carrier family protein H (366 aa).

A compositionally biased stretch (low complexity) spans M1 to S25. Residues M1–N26 are disordered. 3 Solcar repeats span residues K29–Y121, N132–K243, and S259–S360. 6 consecutive transmembrane segments (helical) span residues M35 to V55, G96 to F112, I133 to V151, V175 to S192, F262 to I282, and V340 to I357.

The protein belongs to the mitochondrial carrier (TC 2.A.29) family.

The protein localises to the mitochondrion inner membrane. Functionally, mitochondrial transporter required for glutathione import into mitochondria. This is Mitochondrial substrate carrier family protein H from Dictyostelium discoideum (Social amoeba).